Here is a 613-residue protein sequence, read N- to C-terminus: Phostensin (613 aa).

Over residues 18–33 (EEASVRGREKAERERL) the composition is skewed to basic and acidic residues. Disordered regions lie at residues 18-231 (EEAS…SAYQ) and 266-500 (GEER…AVPG). Phosphoserine is present on residues serine 54, serine 125, serine 133, serine 175, and serine 195. 2 stretches are compositionally biased toward basic and acidic residues: residues 104 to 154 (RSEE…ERRL) and 167 to 191 (LEAR…EAWK). The residue at position 199 (threonine 199) is a Phosphothreonine. The segment covering 199-221 (TPERSLRLAESREQSPRRKEVES) has biased composition (basic and acidic residues). Serine 224 is modified (phosphoserine). The span at 266–282 (GEERQDYSEECGRKEEW) shows a compositional bias: basic and acidic residues. The span at 295–309 (LSETLTREAQGNSSA) shows a compositional bias: polar residues. Composition is skewed to basic and acidic residues over residues 314–327 (AEQR…RGMK), 340–350 (KAREWTPRDIE), and 357–366 (EPPESAEKLL). Serine 368 and serine 432 each carry phosphoserine. Over residues 424–446 (QPPPPAPLSPPPPAPTAPQPPGD) the composition is skewed to pro residues. Lysine 457 is modified (N6-acetyllysine). Over residues 476-499 (PRRSVPPATPATPTSPATVDAAVP) the composition is skewed to low complexity. Residues serine 490 and serine 530 each carry the phosphoserine modification. Positions 552 to 595 (QYPSESSVLEELGPEPEVPSAPNPPAAQPDDEEDEEELLLLQPE) are disordered. Residues 567 to 578 (PEVPSAPNPPAA) are compositionally biased toward pro residues. Residues 580–589 (PDDEEDEEEL) are compositionally biased toward acidic residues.

As to quaternary structure, interacts with Protein phosphatase 1 (PP1). In terms of tissue distribution, isoform 4 is predominantly expressed in leukocytes and spleen.

The protein resides in the cytoplasm. It is found in the cytoskeleton. Its function is as follows. May target protein phosphatase 1 to F-actin cytoskeleton. In Homo sapiens (Human), this protein is Phostensin (PPP1R18).